The sequence spans 274 residues: Large ribosomal subunit protein uL2 (274 aa).

The disordered stretch occupies residues 224–259 (AMNPVDHPHGGGEGRTSGGRHPVTPWGIPTKGYKTR).

This sequence belongs to the universal ribosomal protein uL2 family. Part of the 50S ribosomal subunit. Forms a bridge to the 30S subunit in the 70S ribosome.

Functionally, one of the primary rRNA binding proteins. Required for association of the 30S and 50S subunits to form the 70S ribosome, for tRNA binding and peptide bond formation. It has been suggested to have peptidyltransferase activity; this is somewhat controversial. Makes several contacts with the 16S rRNA in the 70S ribosome. The sequence is that of Large ribosomal subunit protein uL2 from Geobacter sp. (strain M21).